A 209-amino-acid chain; its full sequence is Ribosomal RNA large subunit methyltransferase E (209 aa).

5 residues coordinate S-adenosyl-L-methionine: Gly63, Trp65, Asp83, Asp99, and Asp124. Lys164 (proton acceptor) is an active-site residue.

It belongs to the class I-like SAM-binding methyltransferase superfamily. RNA methyltransferase RlmE family.

Its subcellular location is the cytoplasm. The catalysed reaction is uridine(2552) in 23S rRNA + S-adenosyl-L-methionine = 2'-O-methyluridine(2552) in 23S rRNA + S-adenosyl-L-homocysteine + H(+). Specifically methylates the uridine in position 2552 of 23S rRNA at the 2'-O position of the ribose in the fully assembled 50S ribosomal subunit. The sequence is that of Ribosomal RNA large subunit methyltransferase E from Shewanella pealeana (strain ATCC 700345 / ANG-SQ1).